The following is a 575-amino-acid chain: Phosphoenolpyruvate-protein phosphotransferase (575 aa).

The active-site Tele-phosphohistidine intermediate is His191. 2 residues coordinate phosphoenolpyruvate: Arg298 and Arg334. Positions 435 and 459 each coordinate Mg(2+). Residues 458–459 (ND) and Arg469 contribute to the phosphoenolpyruvate site. Cys506 functions as the Proton donor in the catalytic mechanism.

This sequence belongs to the PEP-utilizing enzyme family. Homodimer. It depends on Mg(2+) as a cofactor.

It is found in the cytoplasm. It carries out the reaction L-histidyl-[protein] + phosphoenolpyruvate = N(pros)-phospho-L-histidyl-[protein] + pyruvate. Its function is as follows. General (non sugar-specific) component of the phosphoenolpyruvate-dependent sugar phosphotransferase system (sugar PTS). This major carbohydrate active-transport system catalyzes the phosphorylation of incoming sugar substrates concomitantly with their translocation across the cell membrane. Enzyme I transfers the phosphoryl group from phosphoenolpyruvate (PEP) to the phosphoryl carrier protein (HPr). The polypeptide is Phosphoenolpyruvate-protein phosphotransferase (ptsI) (Lactococcus lactis subsp. lactis (strain IL1403) (Streptococcus lactis)).